The primary structure comprises 431 residues: Peptidase B (431 aa).

Mn(2+)-binding residues include lysine 196 and aspartate 201. Lysine 208 is a catalytic residue. Positions 219, 278, and 280 each coordinate Mn(2+). The active site involves arginine 282.

It belongs to the peptidase M17 family. Homohexamer. It depends on Mn(2+) as a cofactor.

Its subcellular location is the cytoplasm. It carries out the reaction Release of an N-terminal amino acid, Xaa, from a peptide or arylamide. Xaa is preferably Glu or Asp but may be other amino acids, including Leu, Met, His, Cys and Gln.. Functionally, probably plays an important role in intracellular peptide degradation. This Photorhabdus laumondii subsp. laumondii (strain DSM 15139 / CIP 105565 / TT01) (Photorhabdus luminescens subsp. laumondii) protein is Peptidase B.